A 372-amino-acid chain; its full sequence is Meiotic drive suppressor wtf18 (372 aa).

The next 6 helical transmembrane spans lie at 86–106, 120–140, 153–173, 197–217, 233–253, and 257–277; these read FLLR…TAWV, AFSV…FCFF, VTVI…AQCV, DLVV…FGCV, CSIS…IWTL, and LFGL…TKGL.

It belongs to the WTF family. Homomer. Interacts with other proteins that exhibit high sequence similarity.

The protein resides in the spore membrane. It is found in the vacuole membrane. Functionally, acts as a suppressor component of the dual wtf meiotic drive system, and can suppress but not confer meiotic drive by compatible poisons. Wtf meiotic drive systems promote unequal transmission of alleles from the parental zygote to progeny spores by encoding a poison and an antidote from the same locus; the poison is trans-acting and forms toxic aggregates in all spores within an ascus, wherease the antidote is spore-specific and targets aggregates for degradation by the vacuole. Meiotic drive by wtf systems therefore lead to poisoning of all progeny that do not inherit the dual poison/antidote allele, or express a compatible antidote. The protein is Meiotic drive suppressor wtf18 of Schizosaccharomyces pombe (strain 972 / ATCC 24843) (Fission yeast).